The sequence spans 100 residues: Small ribosomal subunit protein uS14c (100 aa).

Positions 1–10 are enriched in basic and acidic residues; that stretch reads MARKGLIERE. Residues 1 to 29 form a disordered region; sequence MARKGLIEREKKRKKLEQKYHSIRGSSKK.

This sequence belongs to the universal ribosomal protein uS14 family. Part of the 30S ribosomal subunit.

It localises to the plastid. The protein localises to the chloroplast. In terms of biological role, binds 16S rRNA, required for the assembly of 30S particles. This Acorus calamus (Sweet flag) protein is Small ribosomal subunit protein uS14c.